The chain runs to 186 residues: A-type ATP synthase subunit E (186 aa).

Belongs to the V-ATPase E subunit family. In terms of assembly, has multiple subunits with at least A(3), B(3), C, D, E, F, H, I and proteolipid K(x).

Its subcellular location is the cell membrane. Its function is as follows. Component of the A-type ATP synthase that produces ATP from ADP in the presence of a proton gradient across the membrane. This is A-type ATP synthase subunit E from Methanocella arvoryzae (strain DSM 22066 / NBRC 105507 / MRE50).